Reading from the N-terminus, the 662-residue chain is UvrABC system protein B (662 aa).

The Helicase ATP-binding domain occupies 31-188; sequence DNIEGGEKAQ…NDLVDIQFER (158 aa). Residue 44–51 participates in ATP binding; it reads GATGTGKT. Residues 97–120 carry the Beta-hairpin motif; that stretch reads YYDYYQPEAYVPSSDTYIEKDSSV. The Helicase C-terminal domain occupies 435–601; that stretch reads QIDDLLGEIN…TIKKEIRDLI (167 aa). Residues 626–661 enclose the UVR domain; it reads KELVKKLEKQMQEAVEVLDFELAAQIRDMMLEVKAL.

It belongs to the UvrB family. In terms of assembly, forms a heterotetramer with UvrA during the search for lesions. Interacts with UvrC in an incision complex.

The protein resides in the cytoplasm. Its function is as follows. The UvrABC repair system catalyzes the recognition and processing of DNA lesions. A damage recognition complex composed of 2 UvrA and 2 UvrB subunits scans DNA for abnormalities. Upon binding of the UvrA(2)B(2) complex to a putative damaged site, the DNA wraps around one UvrB monomer. DNA wrap is dependent on ATP binding by UvrB and probably causes local melting of the DNA helix, facilitating insertion of UvrB beta-hairpin between the DNA strands. Then UvrB probes one DNA strand for the presence of a lesion. If a lesion is found the UvrA subunits dissociate and the UvrB-DNA preincision complex is formed. This complex is subsequently bound by UvrC and the second UvrB is released. If no lesion is found, the DNA wraps around the other UvrB subunit that will check the other stand for damage. This chain is UvrABC system protein B, found in Streptococcus pneumoniae (strain P1031).